The sequence spans 346 residues: MHIMEFPREVILGKNVISETVNVAKRLSFSSPVLVVYGPKTKEIAGKDVERVLKEEFDVHSVIVKEATINEVEKVEGIIRDNKVKWAIAVGGGTIIDVTKLASYRAGIPFVSFPTTASHDGIASANASIKGLGTKTSIKARPPVAVIADIRIIKSAPRRYLAAGVGDVISNITAVRDWKLAHKIKGEYFSEYAAALSLMSAKMVMRDAEIIRIGDDEGVRKVVKALISSGVAMSIAGSSRPASGAEHLFSHALDLLLEKPALHGEQTGIGTIIMAYLHGINWRKIKETLQKVGAPTTAYELGVDPEIIIEALTIAHTIRPERYTILGRDGLTREAAERAAKITGVI.

NAD(+) is bound by residues 93 to 97 (GTIID) and 115 to 118 (TTAS). Asp-120 contributes to the substrate binding site. Ser-124 serves as a coordination point for NAD(+). Asp-167 lines the substrate pocket. Zn(2+)-binding residues include Asp-167 and His-247. Residue His-251 participates in substrate binding. His-263 is a binding site for Zn(2+).

It belongs to the glycerol-1-phosphate dehydrogenase family. Zn(2+) is required as a cofactor.

It localises to the cytoplasm. The enzyme catalyses sn-glycerol 1-phosphate + NAD(+) = dihydroxyacetone phosphate + NADH + H(+). It catalyses the reaction sn-glycerol 1-phosphate + NADP(+) = dihydroxyacetone phosphate + NADPH + H(+). Its pathway is membrane lipid metabolism; glycerophospholipid metabolism. Its function is as follows. Catalyzes the NAD(P)H-dependent reduction of dihydroxyacetonephosphate (DHAP or glycerone phosphate) to glycerol 1-phosphate (G1P). The G1P thus generated is used as the glycerophosphate backbone of phospholipids in the cellular membranes of Archaea. The chain is Glycerol-1-phosphate dehydrogenase [NAD(P)+] from Pyrococcus furiosus (strain ATCC 43587 / DSM 3638 / JCM 8422 / Vc1).